The primary structure comprises 255 residues: Type III pantothenate kinase (255 aa).

An ATP-binding site is contributed by 6 to 13; it reads DVGNTNTV. Substrate-binding positions include Y100 and 107–110; that span reads GADR. D109 acts as the Proton acceptor in catalysis. D129 provides a ligand contact to K(+). T132 is a binding site for ATP. Residue T184 coordinates substrate.

The protein belongs to the type III pantothenate kinase family. In terms of assembly, homodimer. Requires NH4(+) as cofactor. K(+) is required as a cofactor.

It localises to the cytoplasm. The enzyme catalyses (R)-pantothenate + ATP = (R)-4'-phosphopantothenate + ADP + H(+). It participates in cofactor biosynthesis; coenzyme A biosynthesis; CoA from (R)-pantothenate: step 1/5. Its function is as follows. Catalyzes the phosphorylation of pantothenate (Pan), the first step in CoA biosynthesis. The polypeptide is Type III pantothenate kinase (Acetivibrio thermocellus (strain ATCC 27405 / DSM 1237 / JCM 9322 / NBRC 103400 / NCIMB 10682 / NRRL B-4536 / VPI 7372) (Clostridium thermocellum)).